Reading from the N-terminus, the 103-residue chain is MSVCKGVSGNPAKGEVFLYKHVNFQGDSWKVTGNVYDFRSVSGLNDVVSSVKVGPNTKAFIFKDDRFNGNFIRLEESSQVTDLTTRNLNDAISSIIVATFESA.

The N-terminal arm stretch occupies residues 1 to 13; the sequence is MSVCKGVSGNPAK. 2 Beta/gamma crystallin 'Greek key' domains span residues 14–55 and 57–99; these read GEVF…KVGP and TKAF…IVAT.

Belongs to the beta/gamma-crystallin family.

The protein localises to the cytoplasm. Structural protein. The sequence is that of Spherulin-3A from Physarum polycephalum (Slime mold).